The primary structure comprises 448 residues: Proline iminopeptidase aneH (448 aa).

The AB hydrolase-1 domain occupies 64–191 (PWMLYLQGGP…VEVFIGGGPC (128 aa)). Serine 164 serves as the catalytic Nucleophile. Aspartate 397 is a catalytic residue. Histidine 425 serves as the catalytic Proton donor.

The protein belongs to the peptidase S33 family. Homooligomer.

The protein localises to the cytoplasm. It carries out the reaction Release of N-terminal proline from a peptide.. It functions in the pathway secondary metabolite biosynthesis. In terms of biological role, proline iminopeptidase; part of the gene cluster that mediates the biosynthesis of aculenes, a unique type of norsesquiterpenes that contain a nordaucane skeleton linked to an L-proline moiety and are of mixed biosynthetic origin. The pathway begins with the synthesis of dauca-4,7-diene by the terpene cyclase aneC using farnesyl pyrophosphate (FPP) as substrate. The cytochrome P450 monooxygenase aneF then performs the initial oxidation at C-12 of dauca-4,7-diene to yield asperaculane D. Asperaculane D is substrate of the cytochrome P450 monooxygenase aneD for C-10 hydroxylation to yield asperaculane E. The cytochrome P450 monooxygenase aneG then converts asperaculane E into aculene D via C-2 oxidation. The monomodular nonribosomal peptide synthtase aneB adenylates L-proline and the thiohydrolase aneE transfers this activated L-proline derivative to aculenes D and C to produce respectively aculenes B and A. The dioxygenase aneA converts aculene D into aculene C, and aculene B into aculene A by introducing the 5,6-alkene moiety. Asperculanes A, B, C and F, as well as 14-prolyl asperculane C, might be shunt products of the pathway. The sequence is that of Proline iminopeptidase aneH from Aspergillus aculeatus (strain ATCC 16872 / CBS 172.66 / WB 5094).